Here is a 347-residue protein sequence, read N- to C-terminus: Lipoyl synthase (347 aa).

Residues Cys-55, Cys-60, Cys-66, Cys-81, Cys-85, Cys-88, and Ser-292 each contribute to the [4Fe-4S] cluster site. The Radical SAM core domain maps to 67–281 (WEDREATFLI…RDYGHDIGFA (215 aa)).

Belongs to the radical SAM superfamily. Lipoyl synthase family. The cofactor is [4Fe-4S] cluster.

It is found in the cytoplasm. It carries out the reaction [[Fe-S] cluster scaffold protein carrying a second [4Fe-4S](2+) cluster] + N(6)-octanoyl-L-lysyl-[protein] + 2 oxidized [2Fe-2S]-[ferredoxin] + 2 S-adenosyl-L-methionine + 4 H(+) = [[Fe-S] cluster scaffold protein] + N(6)-[(R)-dihydrolipoyl]-L-lysyl-[protein] + 4 Fe(3+) + 2 hydrogen sulfide + 2 5'-deoxyadenosine + 2 L-methionine + 2 reduced [2Fe-2S]-[ferredoxin]. It participates in protein modification; protein lipoylation via endogenous pathway; protein N(6)-(lipoyl)lysine from octanoyl-[acyl-carrier-protein]: step 2/2. Catalyzes the radical-mediated insertion of two sulfur atoms into the C-6 and C-8 positions of the octanoyl moiety bound to the lipoyl domains of lipoate-dependent enzymes, thereby converting the octanoylated domains into lipoylated derivatives. The polypeptide is Lipoyl synthase (Corynebacterium kroppenstedtii (strain DSM 44385 / JCM 11950 / CIP 105744 / CCUG 35717)).